The following is a 336-amino-acid chain: Aspartate--ammonia ligase (336 aa).

It belongs to the class-II aminoacyl-tRNA synthetase family. AsnA subfamily.

The protein localises to the cytoplasm. It catalyses the reaction L-aspartate + NH4(+) + ATP = L-asparagine + AMP + diphosphate + H(+). The protein operates within amino-acid biosynthesis; L-asparagine biosynthesis; L-asparagine from L-aspartate (ammonia route): step 1/1. The sequence is that of Aspartate--ammonia ligase from Clostridium perfringens (strain SM101 / Type A).